Here is a 590-residue protein sequence, read N- to C-terminus: Threonine dehydratase biosynthetic, chloroplastic (590 aa).

A chloroplast-targeting transit peptide spans 1–44 (MLSTSTTNSSILPFRSRASSSTFIARPPANFNSIFTTSVRVFPI). Lys139 carries the post-translational modification N6-(pyridoxal phosphate)lysine. 2 consecutive ACT-like domains span residues 416-488 (ALLG…NISH) and 509-580 (EVFV…IDQY).

This sequence belongs to the serine/threonine dehydratase family. The cofactor is pyridoxal 5'-phosphate. As to expression, found at higher levels in flowers than in other organs.

The protein resides in the plastid. It is found in the chloroplast. It catalyses the reaction L-threonine = 2-oxobutanoate + NH4(+). It functions in the pathway amino-acid biosynthesis; L-isoleucine biosynthesis; 2-oxobutanoate from L-threonine: step 1/1. Allosterically inhibited by isoleucine. This Cicer arietinum (Chickpea) protein is Threonine dehydratase biosynthetic, chloroplastic.